The primary structure comprises 230 residues: V-type proton ATPase subunit E (230 aa).

Belongs to the V-ATPase E subunit family. V-ATPase is a heteromultimeric enzyme composed of a peripheral catalytic V1 complex (components A to H) attached to an integral membrane V0 proton pore complex (components: a, c, c', c'' and d).

Its function is as follows. Subunit of the peripheral V1 complex of vacuolar ATPase essential for assembly or catalytic function. V-ATPase is responsible for acidifying a variety of intracellular compartments in eukaryotic cells. In Citrus unshiu (Satsuma mandarin), this protein is V-type proton ATPase subunit E (VATE).